Consider the following 310-residue polypeptide: tRNA dimethylallyltransferase (310 aa).

14–21 (GPTASGKT) is a binding site for ATP. 16–21 (TASGKT) is a binding site for substrate. 3 interaction with substrate tRNA regions span residues 39 to 42 (DSAL), 163 to 167 (QRLSR), and 244 to 249 (RCVGYR).

The protein belongs to the IPP transferase family. In terms of assembly, monomer. It depends on Mg(2+) as a cofactor.

It carries out the reaction adenosine(37) in tRNA + dimethylallyl diphosphate = N(6)-dimethylallyladenosine(37) in tRNA + diphosphate. Functionally, catalyzes the transfer of a dimethylallyl group onto the adenine at position 37 in tRNAs that read codons beginning with uridine, leading to the formation of N6-(dimethylallyl)adenosine (i(6)A). This is tRNA dimethylallyltransferase from Tolumonas auensis (strain DSM 9187 / NBRC 110442 / TA 4).